The primary structure comprises 553 residues: Copine-9 (553 aa).

2 C2 domains span residues 1-125 (MSLG…ERTL) and 132-255 (KCGT…FTVY). Asparagine 95 carries an N-linked (GlcNAc...) asparagine glycan. 5 residues coordinate Ca(2+): aspartate 163, aspartate 169, aspartate 225, aspartate 227, and aspartate 233. A VWFA domain is found at 299 to 500 (NFTVAIDFTA…VQFVPFRDYV (202 aa)). A disordered region spans residues 531–553 (TRDIQPRPPPPANPSPIPAPEQP). Residues 536 to 553 (PRPPPPANPSPIPAPEQP) are compositionally biased toward pro residues.

It belongs to the copine family. It depends on Ca(2+) as a cofactor. As to expression, expressed in melanocytes.

Functionally, probable calcium-dependent phospholipid-binding protein that may play a role in calcium-mediated intracellular processes. Plays a role in dendrite formation by melanocytes. The protein is Copine-9 of Homo sapiens (Human).